We begin with the raw amino-acid sequence, 92 residues long: DNA/RNA-binding protein Alba (92 aa).

K11 carries the N6-acetyllysine modification.

The protein belongs to the histone-like Alba family. Acetylated. Acetylation at Lys-11 decreases DNA-binding affinity.

The protein localises to the cytoplasm. Its subcellular location is the chromosome. Functionally, binds double-stranded DNA tightly but without sequence specificity. Involved in DNA compaction. In Pyrobaculum islandicum (strain DSM 4184 / JCM 9189 / GEO3), this protein is DNA/RNA-binding protein Alba.